Here is a 125-residue protein sequence, read N- to C-terminus: Large-conductance mechanosensitive channel (125 aa).

2 helical membrane passes run 14 to 34 and 67 to 87; these read VIDLAVGVIIGAAFTAIVQSL and GSFLNSIINFLIISFIVFLIV.

Belongs to the MscL family. In terms of assembly, homopentamer.

The protein localises to the cell membrane. Functionally, channel that opens in response to stretch forces in the membrane lipid bilayer. May participate in the regulation of osmotic pressure changes within the cell. In Lactobacillus helveticus (strain DPC 4571), this protein is Large-conductance mechanosensitive channel.